The sequence spans 453 residues: Bifunctional protein GlmU (453 aa).

The tract at residues 1-226 (MSLNVVILAA…AMEVEGANNR (226 aa)) is pyrophosphorylase. UDP-N-acetyl-alpha-D-glucosamine-binding positions include 8-11 (LAAG), K22, Q73, 78-79 (GT), 100-102 (YGD), G137, E151, N166, and N224. A Mg(2+)-binding site is contributed by D102. N224 is a Mg(2+) binding site. The tract at residues 227–247 (VQLAQLERSYQKMQAERLMIA) is linker. The segment at 248–453 (GATLIDPARF…QNWARPVKKK (206 aa)) is N-acetyltransferase. UDP-N-acetyl-alpha-D-glucosamine contacts are provided by R330 and K348. H360 serves as the catalytic Proton acceptor. UDP-N-acetyl-alpha-D-glucosamine is bound by residues Y363 and N374. Acetyl-CoA contacts are provided by residues A377, 383–384 (NY), S402, A420, and R437.

It in the N-terminal section; belongs to the N-acetylglucosamine-1-phosphate uridyltransferase family. This sequence in the C-terminal section; belongs to the transferase hexapeptide repeat family. In terms of assembly, homotrimer. The cofactor is Mg(2+).

It localises to the cytoplasm. It catalyses the reaction alpha-D-glucosamine 1-phosphate + acetyl-CoA = N-acetyl-alpha-D-glucosamine 1-phosphate + CoA + H(+). The enzyme catalyses N-acetyl-alpha-D-glucosamine 1-phosphate + UTP + H(+) = UDP-N-acetyl-alpha-D-glucosamine + diphosphate. It participates in nucleotide-sugar biosynthesis; UDP-N-acetyl-alpha-D-glucosamine biosynthesis; N-acetyl-alpha-D-glucosamine 1-phosphate from alpha-D-glucosamine 6-phosphate (route II): step 2/2. The protein operates within nucleotide-sugar biosynthesis; UDP-N-acetyl-alpha-D-glucosamine biosynthesis; UDP-N-acetyl-alpha-D-glucosamine from N-acetyl-alpha-D-glucosamine 1-phosphate: step 1/1. It functions in the pathway bacterial outer membrane biogenesis; LPS lipid A biosynthesis. Its function is as follows. Catalyzes the last two sequential reactions in the de novo biosynthetic pathway for UDP-N-acetylglucosamine (UDP-GlcNAc). The C-terminal domain catalyzes the transfer of acetyl group from acetyl coenzyme A to glucosamine-1-phosphate (GlcN-1-P) to produce N-acetylglucosamine-1-phosphate (GlcNAc-1-P), which is converted into UDP-GlcNAc by the transfer of uridine 5-monophosphate (from uridine 5-triphosphate), a reaction catalyzed by the N-terminal domain. This is Bifunctional protein GlmU from Aeromonas hydrophila subsp. hydrophila (strain ATCC 7966 / DSM 30187 / BCRC 13018 / CCUG 14551 / JCM 1027 / KCTC 2358 / NCIMB 9240 / NCTC 8049).